The sequence spans 249 residues: Putative adhesin RC1281 (249 aa).

Positions 1–22 (MKKLLLIAAASTALLTSGLSFA) are cleaved as a signal peptide.

Adheres to biotinylated epithelial (Vero cell) proteins. This Rickettsia conorii (strain ATCC VR-613 / Malish 7) protein is Putative adhesin RC1281.